A 278-amino-acid chain; its full sequence is MLKNLVVLTGLSGAGKSTALGLLEDMGFYCIDNLPVKIIDQILPIISINIESLALVIDSRSGDIDDIVSVIENMKAKYPVKVIFLNAKDEVLINRFAHTRRNHPLLKEETSLEKAILEERKLFIKILELSDIVVDTSNLNPHQLRERLVGILTSVKKKFRLRILSFGFKYGVPLDVDFIFDVRFFPNPFYVVGLRQKSGKDKEVKNFLYNTQGVKEFLDLIKKVVDFAIQRYENEGRTELSVGIGCTGGQHRSVFFAEELFKFYNENCKVILEHRDVK.

10 to 17 (GLSGAGKS) provides a ligand contact to ATP. 58 to 61 (DSRS) serves as a coordination point for GTP.

Belongs to the RapZ-like family.

Displays ATPase and GTPase activities. The chain is Nucleotide-binding protein Tmel_1373 from Thermosipho melanesiensis (strain DSM 12029 / CIP 104789 / BI429).